The following is a 182-amino-acid chain: tRNA-splicing endonuclease (182 aa).

Residues tyrosine 119, histidine 127, and lysine 158 contribute to the active site.

Belongs to the tRNA-intron endonuclease family. Archaeal short subfamily. In terms of assembly, homotetramer; although the tetramer contains four active sites, only two participate in the cleavage. Therefore, it should be considered as a dimer of dimers.

The enzyme catalyses pretRNA = a 3'-half-tRNA molecule with a 5'-OH end + a 5'-half-tRNA molecule with a 2',3'-cyclic phosphate end + an intron with a 2',3'-cyclic phosphate and a 5'-hydroxyl terminus.. In terms of biological role, endonuclease that removes tRNA introns. Cleaves pre-tRNA at the 5'- and 3'-splice sites to release the intron. The products are an intron and two tRNA half-molecules bearing 2',3' cyclic phosphate and 5'-OH termini. Recognizes a pseudosymmetric substrate in which 2 bulged loops of 3 bases are separated by a stem of 4 bp. The chain is tRNA-splicing endonuclease from Saccharolobus islandicus (strain M.14.25 / Kamchatka #1) (Sulfolobus islandicus).